The sequence spans 393 residues: Staphopain B (393 aa).

The first 36 residues, 1–36 (MNSSYKSRVFNIISIIMVSMLILSLGAFANNNKAKA), serve as a signal peptide directing secretion. Positions 37 to 219 (DSHSKQLEIN…KVEENEAIQE (183 aa)) are excised as a propeptide. Catalysis depends on residues Cys243, His340, and Asn360.

This sequence belongs to the peptidase C47 family. As to quaternary structure, in the cytoplasm, prematurely activated/folded SspB forms a stable non-covalent complex with SspC. Proteolytically cleaved by staphylococcal serine protease (SspA).

Its subcellular location is the secreted. Prematurely activated/folded staphopain B is inhibited by staphostatin B (SspC), which is probably required to protect staphylococcal cytoplasmic proteins from degradation by SspB. In terms of biological role, cysteine protease that plays an important role in the inhibition of host innate immune response. Degrades host elastin, fibrogen, fibronectin and kininogen. Blocks phagocytosis of opsonised S.aureus by neutrophils and monocytes by inducing their death in a proteolytic activity-dependent manner. Decreases surface expression of the 'don't eat me' signal CD31 on neutrophils. Cleaves host galectin-3/LGALS3, thereby inhibiting the neutrophil-activating ability of the lectin. This is Staphopain B (sspB) from Staphylococcus aureus (strain MSSA476).